The sequence spans 182 residues: NADH-quinone oxidoreductase subunit C 2 (182 aa).

The segment at 153–182 (YKDKLNPFGAEGPPPTQPDLATNDIPQGGR) is disordered.

Belongs to the complex I 30 kDa subunit family. As to quaternary structure, NDH-1 is composed of 14 different subunits. Subunits NuoB, C, D, E, F, and G constitute the peripheral sector of the complex.

It localises to the cell inner membrane. It catalyses the reaction a quinone + NADH + 5 H(+)(in) = a quinol + NAD(+) + 4 H(+)(out). Its function is as follows. NDH-1 shuttles electrons from NADH, via FMN and iron-sulfur (Fe-S) centers, to quinones in the respiratory chain. The immediate electron acceptor for the enzyme in this species is believed to be ubiquinone. Couples the redox reaction to proton translocation (for every two electrons transferred, four hydrogen ions are translocated across the cytoplasmic membrane), and thus conserves the redox energy in a proton gradient. This is NADH-quinone oxidoreductase subunit C 2 from Rhizobium meliloti (strain 1021) (Ensifer meliloti).